The chain runs to 353 residues: Mitochondrial distribution and morphology protein 12 (353 aa).

The SMP-LTD domain maps to 1 to 330; that stretch reads MSFDIKWENL…WPSWICLDMN (330 aa). 3 stretches are compositionally biased toward acidic residues: residues 64 to 75, 84 to 103, and 330 to 342; these read DEFYEDTTDSPE, TGDD…DDDG, and NDDD…EENP. Disordered regions lie at residues 64–140 and 330–353; these read DEFY…NRSR and NDDD…HVGS.

Belongs to the MDM12 family. As to quaternary structure, component of the ER-mitochondria encounter structure (ERMES) or MDM complex, composed of MMM1, MDM10, MDM12 and MDM34. An MMM1 homodimer associates with one molecule of MDM12 on each side in a pairwise head-to-tail manner, and the SMP-LTD domains of MMM1 and MDM12 generate a continuous hydrophobic tunnel for phospholipid trafficking.

The protein resides in the mitochondrion outer membrane. The protein localises to the endoplasmic reticulum membrane. Functionally, component of the ERMES/MDM complex, which serves as a molecular tether to connect the endoplasmic reticulum (ER) and mitochondria. Components of this complex are involved in the control of mitochondrial shape and protein biogenesis, and function in nonvesicular lipid trafficking between the ER and mitochondria. MDM12 is required for the interaction of the ER-resident membrane protein MMM1 and the outer mitochondrial membrane-resident beta-barrel protein MDM10. The MDM12-MMM1 subcomplex functions in the major beta-barrel assembly pathway that is responsible for biogenesis of all mitochondrial outer membrane beta-barrel proteins, and acts in a late step after the SAM complex. The MDM10-MDM12-MMM1 subcomplex further acts in the TOM40-specific pathway after the action of the MDM12-MMM1 complex. Essential for establishing and maintaining the structure of mitochondria and maintenance of mtDNA nucleoids. The sequence is that of Mitochondrial distribution and morphology protein 12 from Candida tropicalis (strain ATCC MYA-3404 / T1) (Yeast).